Consider the following 131-residue polypeptide: Large ribosomal subunit protein bL19 (131 aa).

This sequence belongs to the bacterial ribosomal protein bL19 family.

This protein is located at the 30S-50S ribosomal subunit interface and may play a role in the structure and function of the aminoacyl-tRNA binding site. This Rhodopseudomonas palustris (strain BisB18) protein is Large ribosomal subunit protein bL19.